Here is a 428-residue protein sequence, read N- to C-terminus: Lysophosphatidic acid phosphatase type 6 (428 aa).

The N-terminal 32 residues, 1-32 (MITGVFSMRLWTPVGVLTSLAYCLHQRRVALA), are a transit peptide targeting the mitochondrion. The segment at 58-168 (RHGARSPRKP…VFIRSTNIFR (111 aa)) is substrate binding. Histidine 59 serves as the catalytic Nucleophile. The active-site Proton donor is aspartate 335.

Belongs to the histidine acid phosphatase family. As to quaternary structure, monomer.

It localises to the mitochondrion. It carries out the reaction a phosphate monoester + H2O = an alcohol + phosphate. The enzyme catalyses 1-(9Z-octadecenoyl)-sn-glycero-3-phosphate + H2O = 1-(9Z-octadecenoyl)-sn-glycerol + phosphate. Hydrolyzes lysophosphatidic acid (LPA) containing a medium length fatty acid chain to the corresponding monoacylglycerol. Has highest activity with lysophosphatidic acid containing myristate (C14:0), monounsaturated oleate (C18:1) or palmitate (C16:0), and lower activity with C18:0 and C6:0 lysophosphatidic acid. This Pongo abelii (Sumatran orangutan) protein is Lysophosphatidic acid phosphatase type 6 (ACP6).